Reading from the N-terminus, the 107-residue chain is Protein Rev (107 aa).

Phosphoserine; by host CK2 occurs at positions 5 and 8. The homomultimerization stretch occupies residues 18 to 26 (IIKILYQSN). Disordered regions lie at residues 26 to 48 (NPYP…WRAR) and 81 to 107 (LNLD…VGNP). The Nuclear localization signal and RNA-binding (RRE) motif lies at 34-50 (TRQARRNRRRRWRARQR). The span at 36 to 48 (QARRNRRRRWRAR) shows a compositional bias: basic residues. A Nuclear export signal and binding to XPO1 motif is present at residues 73-84 (LQLPPLERLNLD). Residues 89–101 (SGTSGTQQSQGTT) show a composition bias toward low complexity. The residue at position 92 (Ser-92) is a Phosphoserine; by host.

It belongs to the HIV-1 REV protein family. As to quaternary structure, homomultimer; when bound to the RRE. Multimeric assembly is essential for activity and may involve XPO1. Binds to human KPNB1, XPO1, TNPO1, RANBP5 and IPO7. Interacts with the viral Integrase. Interacts with human KHDRBS1. Interacts with human NAP1; this interaction decreases Rev multimerization and stimulates its activity. Interacts with human DEAD-box helicases DDX3 and DDX24; these interactions may serve for viral RNA export to the cytoplasm and packaging, respectively. Interacts with human PSIP1; this interaction may inhibit HIV-1 DNA integration by promoting dissociation of the Integrase-LEDGF/p75 complex. Post-translationally, asymmetrically arginine dimethylated at one site by host PRMT6. Methylation impairs the RNA-binding activity and export of viral RNA from the nucleus to the cytoplasm. Phosphorylated by protein kinase CK2. Presence of, and maybe binding to the N-terminus of the regulatory beta subunit of CK2 is necessary for CK2-mediated Rev's phosphorylation.

Its subcellular location is the host nucleus. It localises to the host nucleolus. It is found in the host cytoplasm. In terms of biological role, escorts unspliced or incompletely spliced viral pre-mRNAs (late transcripts) out of the nucleus of infected cells. These pre-mRNAs carry a recognition sequence called Rev responsive element (RRE) located in the env gene, that is not present in fully spliced viral mRNAs (early transcripts). This function is essential since most viral proteins are translated from unspliced or partially spliced pre-mRNAs which cannot exit the nucleus by the pathway used by fully processed cellular mRNAs. Rev itself is translated from a fully spliced mRNA that readily exits the nucleus. Rev's nuclear localization signal (NLS) binds directly to KPNB1/Importin beta-1 without previous binding to KPNA1/Importin alpha-1. KPNB1 binds to the GDP bound form of RAN (Ran-GDP) and targets Rev to the nucleus. In the nucleus, the conversion from Ran-GDP to Ran-GTP dissociates Rev from KPNB1 and allows Rev's binding to the RRE in viral pre-mRNAs. Rev multimerization on the RRE via cooperative assembly exposes its nuclear export signal (NES) to the surface. Rev can then form a complex with XPO1/CRM1 and Ran-GTP, leading to nuclear export of the complex. Conversion from Ran-GTP to Ran-GDP mediates dissociation of the Rev/RRE/XPO1/RAN complex, so that Rev can return to the nucleus for a subsequent round of export. Beside KPNB1, also seems to interact with TNPO1/Transportin-1, RANBP5/IPO5 and IPO7/RANBP7 for nuclear import. The nucleoporin-like HRB/RIP is an essential cofactor that probably indirectly interacts with Rev to release HIV RNAs from the perinuclear region to the cytoplasm. The sequence is that of Protein Rev from Homo sapiens (Human).